We begin with the raw amino-acid sequence, 433 residues long: MENKINSQSLFQEALQYIPGGVNSPVRAFKSVGQEFPRFIKSAKGAYLYDVDWNKYIDYIGSWGPMILGHGDDDVLEAIQCQLKNGLSYGAPCKQEIELAKKIVELMPNIEQVRFVNSGTEATMSAIRLARAYTGRNKIIKFEGCYHGHADEFLVAAGSGALSLGQPNSPGVPEDVVKDTLVASFNDIESIQALFEKYKNEIACIIVEPIAGNMNMIFPQDDFLAKLRAVCDENNSLLIFDEVMTGFRVALGGAQSIYDVKPDLTTLGKVIGGGMPVGAFGGRKEIMQEVSPAGPVYQAGTLSGNPIAMAAGIKTLEKVSQDDFFVKLEAKAKQLVDGLNEAARVYDFNFHAKYLGGMFGLFFCNEKVAVNTFTDLGKTNLKMFNKYFAYMLDNGVYLAPSAYEAGFISIAHSDEDIEKTICLTKKFFQDNQS.

An N6-(pyridoxal phosphate)lysine modification is found at Lys269.

Belongs to the class-III pyridoxal-phosphate-dependent aminotransferase family. HemL subfamily. Homodimer. The cofactor is pyridoxal 5'-phosphate.

Its subcellular location is the cytoplasm. The catalysed reaction is (S)-4-amino-5-oxopentanoate = 5-aminolevulinate. The protein operates within porphyrin-containing compound metabolism; protoporphyrin-IX biosynthesis; 5-aminolevulinate from L-glutamyl-tRNA(Glu): step 2/2. The sequence is that of Glutamate-1-semialdehyde 2,1-aminomutase from Francisella philomiragia subsp. philomiragia (strain ATCC 25017 / CCUG 19701 / FSC 153 / O#319-036).